The primary structure comprises 229 residues: MSTWANLGLQDSASPLMEQLIFFHDHALLILVMITILVGYLMFMLFFNSYINRFLLHGQLIEMIWTILPAIILLFIAMPSLRLLYLLDEINEPSITLKSIGHQWYWSYEYSDFNDIEFDSYMIPTNELSNDGFRLLDVDNRIVLPMNSQIRILVTAADVIHSWTIPALGVKVDGTPGRLNQTNFFINRPGLFYGQCSEICGANHSFMPIVIESVPVNFFIKWIASKVNS.

Topologically, residues 1–26 are mitochondrial intermembrane; sequence MSTWANLGLQDSASPLMEQLIFFHDH. The chain crosses the membrane as a helical span at residues 27-48; sequence ALLILVMITILVGYLMFMLFFN. Residues 49–62 lie on the Mitochondrial matrix side of the membrane; the sequence is SYINRFLLHGQLIE. Residues 63–82 form a helical membrane-spanning segment; it reads MIWTILPAIILLFIAMPSLR. Over 83 to 229 the chain is Mitochondrial intermembrane; it reads LLYLLDEINE…IKWIASKVNS (147 aa). 6 residues coordinate Cu cation: H161, C196, E198, C200, H204, and M207. Position 198 (E198) interacts with Mg(2+).

The protein belongs to the cytochrome c oxidase subunit 2 family. In terms of assembly, component of the cytochrome c oxidase (complex IV, CIV), a multisubunit enzyme composed of a catalytic core of 3 subunits and several supernumerary subunits. The complex exists as a monomer or a dimer and forms supercomplexes (SCs) in the inner mitochondrial membrane with ubiquinol-cytochrome c oxidoreductase (cytochrome b-c1 complex, complex III, CIII). Requires Cu cation as cofactor.

It is found in the mitochondrion inner membrane. It catalyses the reaction 4 Fe(II)-[cytochrome c] + O2 + 8 H(+)(in) = 4 Fe(III)-[cytochrome c] + 2 H2O + 4 H(+)(out). Component of the cytochrome c oxidase, the last enzyme in the mitochondrial electron transport chain which drives oxidative phosphorylation. The respiratory chain contains 3 multisubunit complexes succinate dehydrogenase (complex II, CII), ubiquinol-cytochrome c oxidoreductase (cytochrome b-c1 complex, complex III, CIII) and cytochrome c oxidase (complex IV, CIV), that cooperate to transfer electrons derived from NADH and succinate to molecular oxygen, creating an electrochemical gradient over the inner membrane that drives transmembrane transport and the ATP synthase. Cytochrome c oxidase is the component of the respiratory chain that catalyzes the reduction of oxygen to water. Electrons originating from reduced cytochrome c in the intermembrane space (IMS) are transferred via the dinuclear copper A center (CU(A)) of subunit 2 and heme A of subunit 1 to the active site in subunit 1, a binuclear center (BNC) formed by heme A3 and copper B (CU(B)). The BNC reduces molecular oxygen to 2 water molecules using 4 electrons from cytochrome c in the IMS and 4 protons from the mitochondrial matrix. In Drosophila bifasciata (Fruit fly), this protein is Cytochrome c oxidase subunit 2 (mt:CoII).